A 177-amino-acid polypeptide reads, in one-letter code: 2-C-methyl-D-erythritol 2,4-cyclodiphosphate synthase (177 aa).

The a divalent metal cation site is built by D23 and H25. 4-CDP-2-C-methyl-D-erythritol 2-phosphate-binding positions include 23 to 25 and 49 to 50; these read DVH and HS. Position 57 (H57) interacts with a divalent metal cation. 4-CDP-2-C-methyl-D-erythritol 2-phosphate is bound by residues 71–73, 76–80, 115–121, and R157; these read DIG, FSDTD, and AQAPRMA.

It belongs to the IspF family. In terms of assembly, homotrimer. The cofactor is a divalent metal cation.

The catalysed reaction is 4-CDP-2-C-methyl-D-erythritol 2-phosphate = 2-C-methyl-D-erythritol 2,4-cyclic diphosphate + CMP. Its pathway is isoprenoid biosynthesis; isopentenyl diphosphate biosynthesis via DXP pathway; isopentenyl diphosphate from 1-deoxy-D-xylulose 5-phosphate: step 4/6. Involved in the biosynthesis of isopentenyl diphosphate (IPP) and dimethylallyl diphosphate (DMAPP), two major building blocks of isoprenoid compounds. Catalyzes the conversion of 4-diphosphocytidyl-2-C-methyl-D-erythritol 2-phosphate (CDP-ME2P) to 2-C-methyl-D-erythritol 2,4-cyclodiphosphate (ME-CPP) with a corresponding release of cytidine 5-monophosphate (CMP). The chain is 2-C-methyl-D-erythritol 2,4-cyclodiphosphate synthase from Nitrosospira multiformis (strain ATCC 25196 / NCIMB 11849 / C 71).